Reading from the N-terminus, the 448-residue chain is tRNA modification GTPase MnmE (448 aa).

Residues R24, E81, and K120 each contribute to the (6S)-5-formyl-5,6,7,8-tetrahydrofolate site. A TrmE-type G domain is found at 216–373 (GLNVVLVGAP…LKRTLLCEAG (158 aa)). Residue N226 coordinates K(+). GTP is bound by residues 226–231 (NVGKSS), 245–251 (TDIAGTT), and 270–273 (DTAG). S230 provides a ligand contact to Mg(2+). K(+) is bound by residues T245, I247, and T250. T251 provides a ligand contact to Mg(2+). K448 contacts (6S)-5-formyl-5,6,7,8-tetrahydrofolate.

It belongs to the TRAFAC class TrmE-Era-EngA-EngB-Septin-like GTPase superfamily. TrmE GTPase family. As to quaternary structure, homodimer. Heterotetramer of two MnmE and two MnmG subunits. The cofactor is K(+).

Its subcellular location is the cytoplasm. Functionally, exhibits a very high intrinsic GTPase hydrolysis rate. Involved in the addition of a carboxymethylaminomethyl (cmnm) group at the wobble position (U34) of certain tRNAs, forming tRNA-cmnm(5)s(2)U34. In Neisseria gonorrhoeae (strain ATCC 700825 / FA 1090), this protein is tRNA modification GTPase MnmE.